A 338-amino-acid polypeptide reads, in one-letter code: Protein-glutamate methylesterase/protein-glutamine glutaminase 2 (338 aa).

The region spanning 2–119 (RIGIVNDSAL…SDTKLAAGPL (118 aa)) is the Response regulatory domain. A 4-aspartylphosphate modification is found at D53. In terms of domain architecture, CheB-type methylesterase spans 145-330 (PTPTAPRLVA…PLQKIAPRLV (186 aa)). Active-site residues include S158, H185, and D278.

Belongs to the CheB family. Phosphorylated by CheA. Phosphorylation of the N-terminal regulatory domain activates the methylesterase activity.

The protein localises to the cytoplasm. It catalyses the reaction [protein]-L-glutamate 5-O-methyl ester + H2O = L-glutamyl-[protein] + methanol + H(+). The catalysed reaction is L-glutaminyl-[protein] + H2O = L-glutamyl-[protein] + NH4(+). Functionally, involved in chemotaxis. Part of a chemotaxis signal transduction system that modulates chemotaxis in response to various stimuli. Catalyzes the demethylation of specific methylglutamate residues introduced into the chemoreceptors (methyl-accepting chemotaxis proteins or MCP) by CheR. Also mediates the irreversible deamidation of specific glutamine residues to glutamic acid. This is Protein-glutamate methylesterase/protein-glutamine glutaminase 2 from Cupriavidus metallidurans (strain ATCC 43123 / DSM 2839 / NBRC 102507 / CH34) (Ralstonia metallidurans).